The sequence spans 493 residues: Probable fatty acyl-CoA reductase 4 (493 aa).

Belongs to the fatty acyl-CoA reductase family. Expressed in the endodermal cell layer surrounding the central vasculature in roots. Expressed in the hilum region of seeds. Expressed in stamen filaments and receptacle of siliques.

It carries out the reaction a long-chain fatty acyl-CoA + 2 NADPH + 2 H(+) = a long-chain primary fatty alcohol + 2 NADP(+) + CoA. Functionally, catalyzes the reduction of fatty acyl-CoA to fatty alcohols. Catalyzes specifically the formation of C18:0 and C20:0 fatty alcohols. Provides the fatty alcohols required for synthesis of suberin in roots, seed coat and wound-induced leaf tissue. Provides the fatty alcohols required for synthesis of alkyl hydroxycinnamates in root waxes. In Arabidopsis thaliana (Mouse-ear cress), this protein is Probable fatty acyl-CoA reductase 4.